We begin with the raw amino-acid sequence, 89 residues long: Small ribosomal subunit protein uS17 (89 aa).

This sequence belongs to the universal ribosomal protein uS17 family. Part of the 30S ribosomal subunit.

Functionally, one of the primary rRNA binding proteins, it binds specifically to the 5'-end of 16S ribosomal RNA. The chain is Small ribosomal subunit protein uS17 from Coxiella burnetii (strain RSA 331 / Henzerling II).